A 619-amino-acid polypeptide reads, in one-letter code: ATP-dependent zinc metalloprotease FtsH (619 aa).

The Cytoplasmic segment spans residues 1-11 (MDKQSKFRIKT). A helical transmembrane segment spans residues 12–32 (FFKKIIFFLIIFCFFYFFNFI). Topologically, residues 33-131 (KKTKKITHTT…FKNYKIYTVL (99 aa)) are periplasmic. Residues 132–152 (NFFYDYGFFLMIIIICWIFIF) traverse the membrane as a helical segment. Residues 153 to 619 (RKIASRSSES…FKEDFASILD (467 aa)) lie on the Cytoplasmic side of the membrane. 224–231 (GPPGTGKT) contributes to the ATP binding site. Histidine 447 is a Zn(2+) binding site. Glutamate 448 is an active-site residue. The Zn(2+) site is built by histidine 451 and aspartate 522.

The protein in the central section; belongs to the AAA ATPase family. It in the C-terminal section; belongs to the peptidase M41 family. Homohexamer. The cofactor is Zn(2+).

It is found in the cell inner membrane. Its function is as follows. Acts as a processive, ATP-dependent zinc metallopeptidase for both cytoplasmic and membrane proteins. Plays a role in the quality control of integral membrane proteins. This Karelsulcia muelleri (strain DMIN) (Sulcia muelleri) protein is ATP-dependent zinc metalloprotease FtsH.